Reading from the N-terminus, the 160-residue chain is Complexin-4 (160 aa).

Residues 14 to 44 are disordered; it reads KNLGFGGGSEEKKEEGGTSDPAAAKGMTREE. Position 157 is a cysteine methyl ester (C157). C157 is lipidated: S-farnesyl cysteine. Residues 158–160 constitute a propeptide, removed in mature form; the sequence is SVM.

This sequence belongs to the complexin/synaphin family. In terms of assembly, weakly binds to the SNARE core complex containing SNAP25, VAMP2 and STX1A. Post-translationally, farnesylation mediates presynaptic targeting and is important for function in neurotransmitter release. In terms of tissue distribution, present specifically in the retina (at protein level). Expressed in the outer nuclear layer of the retina (at protein level). Strongly expressed at rod photoreceptor ribbon synapses (at protein level). Not expressed at conventional amacrine cell synapses, nor at cone photoreceptor ribbon synapses (at protein level). Weakly expressed at cone photoreceptor synaptic terminals (at protein level). Not expressed in the brain (at protein level).

Its subcellular location is the synapse. It is found in the cell membrane. Its function is as follows. Complexin that regulates SNARE protein complex-mediated synaptic vesicle fusion. Required for the maintenance of synaptic ultrastructure in the adult retina. Positively regulates synaptic transmission through synaptic vesicle availability and exocytosis of neurotransmitters at photoreceptor ribbon synapses in the retina. Suppresses tonic photoreceptor activity and baseline 'noise' by suppression of Ca(2+) vesicle tonic release and the facilitation of evoked synchronous and asynchronous Ca(2+) vesicle release. The sequence is that of Complexin-4 (Cplx4) from Mus musculus (Mouse).